Consider the following 350-residue polypeptide: Anthranilate phosphoribosyltransferase (350 aa).

5-phospho-alpha-D-ribose 1-diphosphate-binding positions include Gly-82, 85–86, Ser-90, 92–95, 110–118, and Gly-122; these read GD, NVST, and KHGNRAVTG. Residue Gly-82 participates in anthranilate binding. Ser-94 provides a ligand contact to Mg(2+). Asn-113 is an anthranilate binding site. Arg-168 serves as a coordination point for anthranilate. Mg(2+)-binding residues include Asp-232 and Glu-233.

It belongs to the anthranilate phosphoribosyltransferase family. As to quaternary structure, homodimer. It depends on Mg(2+) as a cofactor.

It catalyses the reaction N-(5-phospho-beta-D-ribosyl)anthranilate + diphosphate = 5-phospho-alpha-D-ribose 1-diphosphate + anthranilate. The protein operates within amino-acid biosynthesis; L-tryptophan biosynthesis; L-tryptophan from chorismate: step 2/5. Its function is as follows. Catalyzes the transfer of the phosphoribosyl group of 5-phosphorylribose-1-pyrophosphate (PRPP) to anthranilate to yield N-(5'-phosphoribosyl)-anthranilate (PRA). The protein is Anthranilate phosphoribosyltransferase of Methanothermobacter marburgensis (strain ATCC BAA-927 / DSM 2133 / JCM 14651 / NBRC 100331 / OCM 82 / Marburg) (Methanobacterium thermoautotrophicum).